We begin with the raw amino-acid sequence, 853 residues long: uncharacterized protein (853 aa).

Residues 1 to 11 (MAPRKKAVTKK) show a composition bias toward basic residues. 3 disordered regions span residues 1–448 (MAPR…SNNV), 485–621 (IAPT…NYFN), and 635–658 (ENYKNNGKNENNNNNNNKNKNEDE). Acidic residues predominate over residues 20–37 (IEEEIIEEPVDEIVESDG). Residues 42 to 55 (NKKKGKRKSSKKSK) show a composition bias toward basic residues. Acidic residues predominate over residues 60-74 (ENVEEEEQDQEEEEE). Residues 75–87 (GNKKQKEENDADK) are compositionally biased toward basic and acidic residues. Positions 88–107 (KSRKHDEHRKKRDSKNRRSH) are enriched in basic residues. The span at 112 to 121 (ENEEGEEDDE) shows a compositional bias: acidic residues. Basic residues predominate over residues 124 to 139 (RKKRRRRKHREKRKKN). 2 stretches are compositionally biased toward acidic residues: residues 143–166 (EEEEEEEQDDEHEDQNVEEDEEDV) and 179–197 (DFDEEEKEEEKEEEEEEEQ). Residues 216 to 228 (DKSKKRKSKKKKR) show a composition bias toward basic residues. Composition is skewed to acidic residues over residues 232–260 (DDDDDDDDNDDDDDDQDEEKEYEQDEDVN) and 268–286 (KEEEEDEEKQSQGSEDEEK). Composition is skewed to basic and acidic residues over residues 287-361 (QSEN…RDHY), 370-400 (SRDHRDHRDRDYRDRDRDHRDRSRDRDRDHY), and 411-425 (RSRDRDNDSKRDEKS). Low complexity-rich tracts occupy residues 426–447 (SSSNNSNNSTSTTSNNNASSNN), 510–613 (NNDN…SNSS), and 636–652 (NYKNNGKNENNNNNNNK).

This is an uncharacterized protein from Dictyostelium discoideum (Social amoeba).